Consider the following 658-residue polypeptide: ATP-dependent RNA helicase DDX3Y (658 aa).

The tract at residues Met-1–Glu-143 is disordered. Position 2 is an N-acetylserine (Ser-2). Positions Arg-45 to Ala-69 are enriched in basic and acidic residues. Residue Lys-56 is modified to N6-acetyllysine. Phosphoserine occurs at positions 86 and 90. Residues Gly-94–Arg-129 are compositionally biased toward basic and acidic residues. Residue Arg-101 is modified to Omega-N-methylarginine. Tyr-104 is modified (phosphotyrosine). Arg-110 carries the omega-N-methylarginine modification. Lys-117 carries the post-translational modification N6-acetyllysine. Residues Ser-130 and Ser-182 each carry the phosphoserine modification. The Q motif motif lies at Glu-179 to Lys-207. Tyr-199–Gln-206 is a binding site for ATP. Positions Ile-210–Leu-402 constitute a Helicase ATP-binding domain. A Glycyl lysine isopeptide (Lys-Gly) (interchain with G-Cter in SUMO2) cross-link involves residue Lys-214. Ala-223–Thr-230 contributes to the ATP binding site. The DEAD box signature appears at Asp-346 to Asp-349. Positions Asn-413–Ala-574 constitute a Helicase C-terminal domain. A Phosphoserine modification is found at Ser-455. Arg-590 is subject to Omega-N-methylarginine. A phosphoserine mark is found at Ser-592 and Ser-603. Residues Ala-597 to Asn-627 form a disordered region. The segment covering Ser-603–Asn-627 has biased composition (low complexity). 2 positions are modified to omega-N-methylarginine: Arg-615 and Arg-628.

This sequence belongs to the DEAD box helicase family. DDX3/DED1 subfamily. In terms of tissue distribution, found in heart, brain, liver, skeletal muscle, kidney and testis. Low expression detected in lung. In testis, expressed in all types of spermatogenic cells including spermatogonia, spermatocytes, spermatids and somatic Sertoli cells within the seminiferous tubules. Also expressed in Leydig cells and other interstitial cells.

It is found in the cytoplasm. It localises to the nucleus. It catalyses the reaction ATP + H2O = ADP + phosphate + H(+). Functionally, probable ATP-dependent RNA helicase. During immune response, may enhance IFNB1 expression via IRF3/IRF7 pathway. This is ATP-dependent RNA helicase DDX3Y (Ddx3y) from Mus musculus (Mouse).